The sequence spans 117 residues: Protein YchN (117 aa).

It to M.jannaschii MJ0989. As to quaternary structure, homohexamer. The hexamer is formed by a dimer of trimers.

This Escherichia coli O157:H7 protein is Protein YchN (ychN).